The primary structure comprises 334 residues: Phosphate acyltransferase (334 aa).

The protein belongs to the PlsX family. As to quaternary structure, homodimer. Probably interacts with PlsY.

The protein localises to the cytoplasm. It catalyses the reaction a fatty acyl-[ACP] + phosphate = an acyl phosphate + holo-[ACP]. The protein operates within lipid metabolism; phospholipid metabolism. In terms of biological role, catalyzes the reversible formation of acyl-phosphate (acyl-PO(4)) from acyl-[acyl-carrier-protein] (acyl-ACP). This enzyme utilizes acyl-ACP as fatty acyl donor, but not acyl-CoA. The protein is Phosphate acyltransferase of Halothermothrix orenii (strain H 168 / OCM 544 / DSM 9562).